The primary structure comprises 120 residues: Ribosome-binding factor A (120 aa).

It belongs to the RbfA family. Monomer. Binds 30S ribosomal subunits, but not 50S ribosomal subunits or 70S ribosomes.

It is found in the cytoplasm. Functionally, one of several proteins that assist in the late maturation steps of the functional core of the 30S ribosomal subunit. Associates with free 30S ribosomal subunits (but not with 30S subunits that are part of 70S ribosomes or polysomes). Required for efficient processing of 16S rRNA. May interact with the 5'-terminal helix region of 16S rRNA. The chain is Ribosome-binding factor A from Chlamydia pneumoniae (Chlamydophila pneumoniae).